Reading from the N-terminus, the 290-residue chain is Nucleotide-binding protein Xfasm12_0753 (290 aa).

13–20 (GLSGSGKS) contacts ATP. 65–68 (DIRS) contributes to the GTP binding site.

It belongs to the RapZ-like family.

Functionally, displays ATPase and GTPase activities. The protein is Nucleotide-binding protein Xfasm12_0753 of Xylella fastidiosa (strain M12).